Reading from the N-terminus, the 823-residue chain is Tax1-binding protein 1 homolog B (823 aa).

Positions 149–487 (VTTKASYLEQ…QKQVVKFNEQ (339 aa)) form a coiled coil. Disordered stretches follow at residues 342–377 (HRQL…QQAN) and 486–519 (EQQG…STSD). The span at 356 to 368 (KALREQLRQKEEQ) shows a compositional bias: basic and acidic residues. The span at 498 to 518 (AAAGPLSASPEASAPGSPSTS) shows a compositional bias: low complexity. Positions 548-638 (QMLNEERERC…NREEEQKDSN (91 aa)) form a coiled coil. The interval 650–746 (MPYAQDDPSP…EPAAPEPAEF (97 aa)) is disordered. Residues 723–739 (LEEPEEPQSTQNDDEPA) show a composition bias toward acidic residues. UBZ1-type zinc fingers lie at residues 762 to 788 (QKRC…VESH) and 789 to 815 (WKIC…VLTH). Residues Cys765, Cys768, His784, His788, Cys792, Cys795, His811, and His815 each contribute to the Zn(2+) site.

In terms of tissue distribution, expressed at relatively high levels in both proximal and distal regions of the fin bud during pectoral fin development.

May have anti-apoptotic activity. The protein is Tax1-binding protein 1 homolog B (tax1bp1b) of Danio rerio (Zebrafish).